The primary structure comprises 256 residues: Acetyl-coenzyme A carboxylase carboxyl transferase subunit alpha (256 aa).

The CoA carboxyltransferase C-terminal domain maps to Met-1 to Glu-236.

This sequence belongs to the AccA family. Acetyl-CoA carboxylase is a heterohexamer composed of biotin carboxyl carrier protein (AccB), biotin carboxylase (AccC) and two subunits each of ACCase subunit alpha (AccA) and ACCase subunit beta (AccD).

The protein resides in the cytoplasm. The catalysed reaction is N(6)-carboxybiotinyl-L-lysyl-[protein] + acetyl-CoA = N(6)-biotinyl-L-lysyl-[protein] + malonyl-CoA. It participates in lipid metabolism; malonyl-CoA biosynthesis; malonyl-CoA from acetyl-CoA: step 1/1. Component of the acetyl coenzyme A carboxylase (ACC) complex. First, biotin carboxylase catalyzes the carboxylation of biotin on its carrier protein (BCCP) and then the CO(2) group is transferred by the carboxyltransferase to acetyl-CoA to form malonyl-CoA. This is Acetyl-coenzyme A carboxylase carboxyl transferase subunit alpha from Streptococcus thermophilus (strain ATCC BAA-250 / LMG 18311).